The following is a 446-amino-acid chain: Radical S-adenosyl methionine domain-containing protein 1, mitochondrial (446 aa).

The region spanning 15–277 (KGYNKLKDLP…VCEAEAMGFQ (263 aa)) is the Radical SAM core domain. The [4Fe-4S] cluster site is built by Cys-34, Cys-38, and Cys-41. Residues Gly-94, 95 to 96 (GT), Glu-130, Gln-159, Arg-171, and Asp-195 each bind S-adenosyl-L-methionine.

Belongs to the anaerobic coproporphyrinogen-III oxidase family. HemW subfamily.

The protein resides in the mitochondrion. Its function is as follows. May be a heme chaperone, appears to bind heme. Homologous bacterial proteins do not have oxygen-independent coproporphyrinogen-III oxidase activity. Binds 1 [4Fe-4S] cluster. The cluster is coordinated with 3 cysteines and an exchangeable S-adenosyl-L-methionine. In Dictyostelium discoideum (Social amoeba), this protein is Radical S-adenosyl methionine domain-containing protein 1, mitochondrial (rsad1).